The following is a 427-amino-acid chain: Trigger factor (427 aa).

The PPIase FKBP-type domain maps to 163 to 248 (GDTAVIDFEG…VHEIKAKELP (86 aa)).

This sequence belongs to the FKBP-type PPIase family. Tig subfamily.

The protein resides in the cytoplasm. It catalyses the reaction [protein]-peptidylproline (omega=180) = [protein]-peptidylproline (omega=0). In terms of biological role, involved in protein export. Acts as a chaperone by maintaining the newly synthesized protein in an open conformation. Functions as a peptidyl-prolyl cis-trans isomerase. The sequence is that of Trigger factor from Bacillus cytotoxicus (strain DSM 22905 / CIP 110041 / 391-98 / NVH 391-98).